Reading from the N-terminus, the 142-residue chain is Phosphoribosyl-AMP cyclohydrolase (142 aa).

Aspartate 92 is a Mg(2+) binding site. Cysteine 93 is a binding site for Zn(2+). Residues aspartate 94 and aspartate 96 each coordinate Mg(2+). The Zn(2+) site is built by cysteine 109 and cysteine 116.

The protein belongs to the PRA-CH family. Homodimer. Requires Mg(2+) as cofactor. Zn(2+) is required as a cofactor.

It is found in the cytoplasm. It catalyses the reaction 1-(5-phospho-beta-D-ribosyl)-5'-AMP + H2O = 1-(5-phospho-beta-D-ribosyl)-5-[(5-phospho-beta-D-ribosylamino)methylideneamino]imidazole-4-carboxamide. It functions in the pathway amino-acid biosynthesis; L-histidine biosynthesis; L-histidine from 5-phospho-alpha-D-ribose 1-diphosphate: step 3/9. Functionally, catalyzes the hydrolysis of the adenine ring of phosphoribosyl-AMP. The sequence is that of Phosphoribosyl-AMP cyclohydrolase from Halorhodospira halophila (strain DSM 244 / SL1) (Ectothiorhodospira halophila (strain DSM 244 / SL1)).